The following is a 466-amino-acid chain: Adenosylhomocysteinase (466 aa).

Substrate is bound by residues threonine 57, aspartate 132, and glutamate 192. NAD(+) is bound at residue 193–195; the sequence is TTT. Residues lysine 222 and aspartate 226 each coordinate substrate. NAD(+) is bound by residues asparagine 227, 256–261, glutamate 279, asparagine 314, 335–337, and asparagine 380; these read GYGDVG and IGH.

This sequence belongs to the adenosylhomocysteinase family. Requires NAD(+) as cofactor.

It is found in the cytoplasm. It catalyses the reaction S-adenosyl-L-homocysteine + H2O = L-homocysteine + adenosine. The protein operates within amino-acid biosynthesis; L-homocysteine biosynthesis; L-homocysteine from S-adenosyl-L-homocysteine: step 1/1. May play a key role in the regulation of the intracellular concentration of adenosylhomocysteine. The protein is Adenosylhomocysteinase of Rhizobium meliloti (strain 1021) (Ensifer meliloti).